A 373-amino-acid polypeptide reads, in one-letter code: tRNA-specific 2-thiouridylase MnmA (373 aa).

Residues 12 to 19 (GMSGGVDS) and M38 each bind ATP. Positions 98–100 (NPD) are interaction with target base in tRNA. The active-site Nucleophile is C103. Cysteines 103 and 200 form a disulfide. G127 is a binding site for ATP. The segment at 150-152 (KDQ) is interaction with tRNA. Catalysis depends on C200, which acts as the Cysteine persulfide intermediate. The segment at 312 to 313 (RY) is interaction with tRNA.

It belongs to the MnmA/TRMU family.

The protein resides in the cytoplasm. The catalysed reaction is S-sulfanyl-L-cysteinyl-[protein] + uridine(34) in tRNA + AH2 + ATP = 2-thiouridine(34) in tRNA + L-cysteinyl-[protein] + A + AMP + diphosphate + H(+). Functionally, catalyzes the 2-thiolation of uridine at the wobble position (U34) of tRNA, leading to the formation of s(2)U34. The sequence is that of tRNA-specific 2-thiouridylase MnmA from Streptococcus pneumoniae (strain Hungary19A-6).